Here is a 369-residue protein sequence, read N- to C-terminus: Anhydro-N-acetylmuramic acid kinase (369 aa).

Position 12 to 19 (Gly-12 to Asp-19) interacts with ATP.

It belongs to the anhydro-N-acetylmuramic acid kinase family.

The catalysed reaction is 1,6-anhydro-N-acetyl-beta-muramate + ATP + H2O = N-acetyl-D-muramate 6-phosphate + ADP + H(+). Its pathway is amino-sugar metabolism; 1,6-anhydro-N-acetylmuramate degradation. The protein operates within cell wall biogenesis; peptidoglycan recycling. Catalyzes the specific phosphorylation of 1,6-anhydro-N-acetylmuramic acid (anhMurNAc) with the simultaneous cleavage of the 1,6-anhydro ring, generating MurNAc-6-P. Is required for the utilization of anhMurNAc either imported from the medium or derived from its own cell wall murein, and thus plays a role in cell wall recycling. The protein is Anhydro-N-acetylmuramic acid kinase of Shewanella putrefaciens (strain CN-32 / ATCC BAA-453).